The sequence spans 698 residues: Epithelial sodium channel subunit alpha (698 aa).

The tract at residues 1–70 is disordered; that stretch reads MLDHTRAPEL…SAPRQPTEEE (70 aa). Over 1 to 110 the chain is Cytoplasmic; it reads MLDHTRAPEL…CSKHNRMKTA (110 aa). Residues 111 to 131 form a helical membrane-spanning segment; sequence FWAVLWLCTFGMMYWQFALLF. Residues 132–589 lie on the Extracellular side of the membrane; it reads EEYLSYPVSL…SQWSLWFGSS (458 aa). Disulfide bonds link Cys-158–Cys-332, Cys-256–Cys-263, and Cys-309–Cys-316. Asn-190 carries an N-linked (GlcNAc...) asparagine glycan. Positions 200 to 270 are gating release of inhibition by proteolysis (GRIP); protease-sensitive region that is responsible for the proteolytic activation of the channel; sequence RRRSSRDLLG…SDCFYQTYSS (71 aa). The tract at residues 213–243 is disordered; the sequence is HPLQRLRTPPPPYSGRTARSGSSSVRDNNPQ. Residues 229–243 show a composition bias toward polar residues; that stretch reads TARSGSSSVRDNNPQ. Asn-259 is a glycosylation site (N-linked (GlcNAc...) asparagine). Asn-320, Asn-339, and Asn-424 each carry an N-linked (GlcNAc...) asparagine glycan. Disulfide bonds link Cys-421/Cys-506, Cys-443/Cys-483, Cys-443/Cys-502, Cys-447/Cys-498, Cys-456/Cys-483, Cys-456/Cys-506, and Cys-458/Cys-472. Asn-538 carries N-linked (GlcNAc...) asparagine glycosylation. Residues 590–610 traverse the membrane as a helical segment; sequence VLSVVEMAELIFDLLVITLLM. Residues 611–698 are Cytoplasmic-facing; that stretch reads LLRRFRSRYW…DCSACALAAL (88 aa). Positions 637 to 663 are disordered; that stretch reads ASSFPSRFCPHPTSPPPSLPQQGMTPP. The PY motif; recruits WW domain-containing proteins and is thereby required for ubiquitination and inhibition of the channel by NEDD4 and NEDD4L motif lies at 669 to 673; the sequence is PPPAY.

It belongs to the amiloride-sensitive sodium channel (TC 1.A.6) family. SCNN1A subfamily. Heterotrimer; containing an alpha/SCNN1A, a beta/SCNN1B and a gamma/SCNN1G subunit. Interacts with WWP1 (via WW domains). Interacts with WWP2 (via WW domains); inhibits the channel. Interacts with BPIFA1; the interaction is indirect via SCNN1B and inhibits the proteolytic processing of SCNN1A and SCNN1G and the activation of ENaC. Interacts with the full-length immature form of PCSK9 (pro-PCSK9). In terms of processing, ubiquitinated. Can be ubiquitinated at multiple sites and undergo monoubiquitination and polyubiquitination. Ubiquitination by NEDD4 or NEDD4L inhibits the ENaC channel through endocytosis, intracellular retention and degradation of its individual subunits. N-glycosylated. Post-translationally, ENaC is activated through the proteolytic maturation of its subunits. Furin cleaves the SCNN1A subunit, which results in a stepwise increase in the open probability of the channel due to the release of an inhibitory tract. BPIFA1, which is recruited by the SCNN1B subunit, prevents the proteolytic activation of ENaC. In terms of tissue distribution, detected in kidney, lung and testis (at protein level). In the testis, detected within the seminiferous tubules but not in the interstitial cells (at protein level).

The protein resides in the apical cell membrane. It localises to the cell projection. Its subcellular location is the cilium. The protein localises to the cytoplasmic granule. It is found in the cytoplasm. The protein resides in the cytoplasmic vesicle. It localises to the secretory vesicle. Its subcellular location is the acrosome. The protein localises to the flagellum. The catalysed reaction is Na(+)(in) = Na(+)(out). Originally identified and characterized by its inhibition by the diuretic drug amiloride. Functionally, this is one of the three pore-forming subunits of the heterotrimeric epithelial sodium channel (ENaC), a critical regulator of sodium balance and fluid homeostasis. ENaC operates in epithelial tissues, where it mediates the electrodiffusion of sodium ions from extracellular fluid through the apical membrane of cells, with water following osmotically. It plays a key role in maintaining sodium homeostasis through electrogenic sodium reabsorption in the kidneys. Additionally, ENaC is essential for airway surface liquid homeostasis, which is crucial for proper mucus clearance. The polypeptide is Epithelial sodium channel subunit alpha (Rattus norvegicus (Rat)).